A 246-amino-acid polypeptide reads, in one-letter code: MyoD family inhibitor domain-containing protein (246 aa).

Disordered stretches follow at residues 1 to 93 and 134 to 164; these read MSQE…EEET and KIQS…ASPE. Over 1–170 the chain is Extracellular; the sequence is MSQEREPFSP…ASPEDGCVHC (170 aa). Over residues 63–87 the composition is skewed to polar residues; the sequence is EDNSNSQPIKAQPQRLPQPNTSALE. The 173-residue stretch at 74-246 folds into the MDFI domain; it reads QPQRLPQPNT…MECCGICFPS (173 aa). A helical transmembrane segment spans residues 171-188; that stretch reads ILTCLFCEFLTLCNIVVG. Residues 189-246 lie on the Cytoplasmic side of the membrane; sequence QASCGICTSEACCCCCTEEMGDDCNCPCDMDCGIMDACCESSDCLEICMECCGICFPS.

It belongs to the MDFI family. In terms of tissue distribution, expressed broadly at a low level in the early embryo.

It localises to the cytoplasm. It is found in the cell membrane. The protein resides in the secreted. In terms of biological role, required to control the activity of various transcription factors through their sequestration in the cytoplasm. Retains nuclear Zic proteins in the cytoplasm and inhibits their transcriptional activation. Required for dorsoanterior development. Necessary for siamois to activate downstream target genes, including gsc, during execution of the dorsal organizer program. Also regulates the transcriptional activity of TCF7L1/TCF3 by interacting directly with TCF7L1/TCF3 and preventing it from binding DNA. Involved in the development of lymphatic vessel valves. It is required to promote lymphatic endothelial cell migration, in a process that involves down-regulation of integrin beta 1 activation and control of cell adhesion to the extracellular matrix. The chain is MyoD family inhibitor domain-containing protein from Xenopus laevis (African clawed frog).